Consider the following 414-residue polypeptide: Serine hydroxymethyltransferase (414 aa).

(6S)-5,6,7,8-tetrahydrofolate-binding positions include L121 and 125 to 127 (GHL). K229 carries the N6-(pyridoxal phosphate)lysine modification.

It belongs to the SHMT family. As to quaternary structure, homodimer. Pyridoxal 5'-phosphate is required as a cofactor.

It localises to the cytoplasm. The catalysed reaction is (6R)-5,10-methylene-5,6,7,8-tetrahydrofolate + glycine + H2O = (6S)-5,6,7,8-tetrahydrofolate + L-serine. The protein operates within one-carbon metabolism; tetrahydrofolate interconversion. It functions in the pathway amino-acid biosynthesis; glycine biosynthesis; glycine from L-serine: step 1/1. Functionally, catalyzes the reversible interconversion of serine and glycine with tetrahydrofolate (THF) serving as the one-carbon carrier. This reaction serves as the major source of one-carbon groups required for the biosynthesis of purines, thymidylate, methionine, and other important biomolecules. Also exhibits THF-independent aldolase activity toward beta-hydroxyamino acids, producing glycine and aldehydes, via a retro-aldol mechanism. In Polaromonas sp. (strain JS666 / ATCC BAA-500), this protein is Serine hydroxymethyltransferase.